The chain runs to 183 residues: MLTMDDIVREGHPALREVATEVTFPLSDEEKKLGRDMLEFLINSQDEDLAEKYGLRGGVGIAAPQLAVTKRFLAIHVHDEKDRLYSYVLYNPKIRSHSVQQACLSGGEGCLSVDREVPGYVVRSERVTIDAFDENGTPLKLRFKGYPAIVIQHEIDHLNGIMFYDHINKENPSYLPPDVDVFG.

Residues C110 and H153 each contribute to the Fe cation site. E154 is an active-site residue. Fe cation is bound at residue H157.

The protein belongs to the polypeptide deformylase family. Fe(2+) is required as a cofactor.

It catalyses the reaction N-terminal N-formyl-L-methionyl-[peptide] + H2O = N-terminal L-methionyl-[peptide] + formate. In terms of biological role, removes the formyl group from the N-terminal Met of newly synthesized proteins. Requires at least a dipeptide for an efficient rate of reaction. N-terminal L-methionine is a prerequisite for activity but the enzyme has broad specificity at other positions. This chain is Peptide deformylase, found in Listeria monocytogenes serovar 1/2a (strain ATCC BAA-679 / EGD-e).